A 203-amino-acid polypeptide reads, in one-letter code: Large ribosomal subunit protein bL25 (203 aa).

The protein belongs to the bacterial ribosomal protein bL25 family. CTC subfamily. In terms of assembly, part of the 50S ribosomal subunit; part of the 5S rRNA/L5/L18/L25 subcomplex. Contacts the 5S rRNA. Binds to the 5S rRNA independently of L5 and L18.

In terms of biological role, this is one of the proteins that binds to the 5S RNA in the ribosome where it forms part of the central protuberance. The sequence is that of Large ribosomal subunit protein bL25 from Rickettsia africae (strain ESF-5).